A 175-amino-acid chain; its full sequence is Peptide deformylase (175 aa).

The Fe cation site is built by cysteine 99 and histidine 141. Glutamate 142 is an active-site residue. Residue histidine 145 participates in Fe cation binding.

It belongs to the polypeptide deformylase family. It depends on Fe(2+) as a cofactor.

The catalysed reaction is N-terminal N-formyl-L-methionyl-[peptide] + H2O = N-terminal L-methionyl-[peptide] + formate. In terms of biological role, removes the formyl group from the N-terminal Met of newly synthesized proteins. Requires at least a dipeptide for an efficient rate of reaction. N-terminal L-methionine is a prerequisite for activity but the enzyme has broad specificity at other positions. In Rickettsia prowazekii (strain Madrid E), this protein is Peptide deformylase.